The chain runs to 329 residues: Chloroplast envelope quinone oxidoreductase homolog (329 aa).

Arginine 58 is a binding site for substrate.

Belongs to the zinc-containing alcohol dehydrogenase family. Quinone oxidoreductase subfamily. In terms of assembly, homodimer or homotetramer. Transition to monomer upon NADPH binding. Interacts with calmodulin. Interacts with HP30-1, HP30-2 and HP20.

It localises to the plastid. The protein localises to the chloroplast inner membrane. Its function is as follows. NADPH-dependent alpha,beta-unsaturated oxoene reductase reducing the double bond of medium-chain (C9) to long-chain (C18) reactive electrophile species deriving from poly-unsaturated fatty acid peroxides. The best substrates are 13-lipoxygenase-derived gamma-ketols, but is unable to reduce the double bond of short-chain alkenals and alkenones such as acrolein, crotonaldehyde, 3-buten-2-one, 4-hexen-3-one and trans-2-hexenal, or quinones such as duroquinone, decylubiquinone, coenzyme Q0, menadione, menaquinone and phylloquinone. Can use trans-2-nonenal, trans-3-decen-2-one, 4-hydroxynonenal, 12-oxo-10(E) dodecanoate (traumatin), 4-oxononenal, trans-1,3 diphenyl-2-propenone, trans-1,4-diphenyl-2-butene-1,4-dione, 9-oxo-12,13-epoxy-(10E)-octadecenoic acid (trans-EKODE-1b), 9-hydroxy-12-oxo-10(E)-octadecenoic acid, 9-Hydroxy-12-oxo-10(E),15(Z)-octadecadienoic acid and 9,13-dihydroxy-10-oxo-11-octadecenoic acid as substrates, but has no activity with 13(R,S)-hydroperoxy-9(Z),11(E)-octadecadienoic acid (13-HPOD), 9(S),12(S),13(S)-trihydroxy-10(E)-octadecenoic acid, 13-hydroxy-12-oxo-9(Z)-octadecenoic acid, 9-oxo-10(E),12(Z)-octadecadienoic acid (9-KODE), 13-oxo-9(Z),11(E)-octadecadienoic acid (13-KODE) and 12-oxo-10,15(Z)-phytodienoic acid (12-OPDA). The polypeptide is Chloroplast envelope quinone oxidoreductase homolog (Arabidopsis thaliana (Mouse-ear cress)).